The sequence spans 342 residues: Isopentenyl-diphosphate delta-isomerase (342 aa).

Substrate is bound at residue R11–K12. Residues S68, S69–T71, S99, and N127 contribute to the FMN site. S99–R101 provides a ligand contact to substrate. E163 is a binding site for Mg(2+). FMN contacts are provided by residues K194, T224, and A295 to G296.

Belongs to the IPP isomerase type 2 family. As to quaternary structure, homooctamer. Dimer of tetramers. It depends on FMN as a cofactor. NADPH is required as a cofactor. The cofactor is Mg(2+).

It localises to the cytoplasm. The enzyme catalyses isopentenyl diphosphate = dimethylallyl diphosphate. Functionally, involved in the biosynthesis of isoprenoids. Catalyzes the 1,3-allylic rearrangement of the homoallylic substrate isopentenyl (IPP) to its allylic isomer, dimethylallyl diphosphate (DMAPP). In Rickettsia typhi (strain ATCC VR-144 / Wilmington), this protein is Isopentenyl-diphosphate delta-isomerase.